We begin with the raw amino-acid sequence, 401 residues long: 8-amino-7-oxononanoate synthase (401 aa).

R24 is a binding site for substrate. Residue 111–112 (GF) participates in pyridoxal 5'-phosphate binding. Position 137 (H137) interacts with substrate. Pyridoxal 5'-phosphate is bound by residues S183, H211, and T240. N6-(pyridoxal phosphate)lysine is present on K243. A substrate-binding site is contributed by T357.

This sequence belongs to the class-II pyridoxal-phosphate-dependent aminotransferase family. BioF subfamily. In terms of assembly, homodimer. It depends on pyridoxal 5'-phosphate as a cofactor.

The catalysed reaction is 6-carboxyhexanoyl-[ACP] + L-alanine + H(+) = (8S)-8-amino-7-oxononanoate + holo-[ACP] + CO2. It functions in the pathway cofactor biosynthesis; biotin biosynthesis. Its function is as follows. Catalyzes the decarboxylative condensation of pimeloyl-[acyl-carrier protein] and L-alanine to produce 8-amino-7-oxononanoate (AON), [acyl-carrier protein], and carbon dioxide. This Xanthomonas oryzae pv. oryzae (strain MAFF 311018) protein is 8-amino-7-oxononanoate synthase.